Reading from the N-terminus, the 328-residue chain is GMP reductase (328 aa).

C176 functions as the Thioimidate intermediate in the catalytic mechanism. Position 205–228 (205–228) interacts with NADP(+); it reads IIADGGIRTHGDIAKSIRFGASMI.

It belongs to the IMPDH/GMPR family. GuaC type 2 subfamily.

The enzyme catalyses IMP + NH4(+) + NADP(+) = GMP + NADPH + 2 H(+). Its function is as follows. Catalyzes the irreversible NADPH-dependent deamination of GMP to IMP. It functions in the conversion of nucleobase, nucleoside and nucleotide derivatives of G to A nucleotides, and in maintaining the intracellular balance of A and G nucleotides. The polypeptide is GMP reductase (Streptococcus pneumoniae serotype 2 (strain D39 / NCTC 7466)).